A 260-amino-acid polypeptide reads, in one-letter code: 4-hydroxy-tetrahydrodipicolinate reductase (260 aa).

Residues 8-13, Glu-35, 91-93, and 115-118 each bind NAD(+); these read GAAGRM, GTT, and APNM. Catalysis depends on His-148, which acts as the Proton donor/acceptor. His-149 serves as a coordination point for (S)-2,3,4,5-tetrahydrodipicolinate. The active-site Proton donor is Lys-152. 158-159 is a (S)-2,3,4,5-tetrahydrodipicolinate binding site; that stretch reads GT.

The protein belongs to the DapB family.

It localises to the cytoplasm. The catalysed reaction is (S)-2,3,4,5-tetrahydrodipicolinate + NAD(+) + H2O = (2S,4S)-4-hydroxy-2,3,4,5-tetrahydrodipicolinate + NADH + H(+). The enzyme catalyses (S)-2,3,4,5-tetrahydrodipicolinate + NADP(+) + H2O = (2S,4S)-4-hydroxy-2,3,4,5-tetrahydrodipicolinate + NADPH + H(+). Its pathway is amino-acid biosynthesis; L-lysine biosynthesis via DAP pathway; (S)-tetrahydrodipicolinate from L-aspartate: step 4/4. Its function is as follows. Catalyzes the conversion of 4-hydroxy-tetrahydrodipicolinate (HTPA) to tetrahydrodipicolinate. The chain is 4-hydroxy-tetrahydrodipicolinate reductase from Rubrobacter xylanophilus (strain DSM 9941 / JCM 11954 / NBRC 16129 / PRD-1).